The primary structure comprises 459 residues: Cysteine--tRNA ligase (459 aa).

Residue Cys29 coordinates Zn(2+). The 'HIGH' region signature appears at 31 to 41 (MTVYDLCHLGH). Positions 213, 238, and 242 each coordinate Zn(2+). The short motif at 270–274 (KMSKS) is the 'KMSKS' region element. Lys273 contributes to the ATP binding site.

The protein belongs to the class-I aminoacyl-tRNA synthetase family. In terms of assembly, monomer. Zn(2+) serves as cofactor.

It localises to the cytoplasm. The catalysed reaction is tRNA(Cys) + L-cysteine + ATP = L-cysteinyl-tRNA(Cys) + AMP + diphosphate. The sequence is that of Cysteine--tRNA ligase from Albidiferax ferrireducens (strain ATCC BAA-621 / DSM 15236 / T118) (Rhodoferax ferrireducens).